The chain runs to 432 residues: Gamma-glutamyl phosphate reductase (432 aa).

It belongs to the gamma-glutamyl phosphate reductase family.

The protein resides in the cytoplasm. The catalysed reaction is L-glutamate 5-semialdehyde + phosphate + NADP(+) = L-glutamyl 5-phosphate + NADPH + H(+). Its pathway is amino-acid biosynthesis; L-proline biosynthesis; L-glutamate 5-semialdehyde from L-glutamate: step 2/2. In terms of biological role, catalyzes the NADPH-dependent reduction of L-glutamate 5-phosphate into L-glutamate 5-semialdehyde and phosphate. The product spontaneously undergoes cyclization to form 1-pyrroline-5-carboxylate. The sequence is that of Gamma-glutamyl phosphate reductase from Ruminiclostridium cellulolyticum (strain ATCC 35319 / DSM 5812 / JCM 6584 / H10) (Clostridium cellulolyticum).